The chain runs to 574 residues: Secreted lipase 1 (574 aa).

The first 17 residues, Met-1–Ala-17, serve as a signal peptide directing secretion. Cys-95 and Cys-132 are oxidised to a cystine. Ser-244 acts as the Acyl-ester intermediate in catalysis. A disulfide bridge links Cys-303 with Cys-312. N-linked (GlcNAc...) asparagine glycosylation occurs at Asn-323. The active-site Charge relay system is the Glu-376. Asn-386 carries an N-linked (GlcNAc...) asparagine glycan. His-489 functions as the Charge relay system in the catalytic mechanism. An N-linked (GlcNAc...) asparagine glycan is attached at Asn-524.

It belongs to the type-B carboxylesterase/lipase family.

It localises to the secreted. It catalyses the reaction a carboxylic ester + H2O = an alcohol + a carboxylate + H(+). Functionally, secreted lipase that allows the use of hydrolyzed lipids as carbon sources. Has highest activity with methyl umbelliferyl oleate (C18:1), whereas much lower activities are obtained with the respective esters of palmitate (C16:0) and stearate (C18:0) (24% and 12% of the activity obtained with umbelliferyl oleate, respectively). Hydrolyzes 1- and 3-positioned ester bonds in preference to 2-positioned ester bonds. The production rate of monoglycerides is lower than that of diacylglycerides. Seems not required for the penetration of intact host tissue. The protein is Secreted lipase 1 of Botryotinia fuckeliana (strain B05.10) (Noble rot fungus).